A 739-amino-acid polypeptide reads, in one-letter code: Phosphoribosylformylglycinamidine synthase subunit PurL (739 aa).

Residue H49 is part of the active site. ATP contacts are provided by Y52 and K91. E93 is a binding site for Mg(2+). Substrate is bound by residues 94-97 (SHNH) and R116. The Proton acceptor role is filled by H95. Position 117 (D117) interacts with Mg(2+). Q240 contributes to the substrate binding site. D268 contacts Mg(2+). 312–314 (ESQ) serves as a coordination point for substrate. Residues D493 and G530 each contribute to the ATP site. A Mg(2+)-binding site is contributed by N531. A substrate-binding site is contributed by S533.

This sequence belongs to the FGAMS family. Monomer. Part of the FGAM synthase complex composed of 1 PurL, 1 PurQ and 2 PurS subunits.

Its subcellular location is the cytoplasm. The catalysed reaction is N(2)-formyl-N(1)-(5-phospho-beta-D-ribosyl)glycinamide + L-glutamine + ATP + H2O = 2-formamido-N(1)-(5-O-phospho-beta-D-ribosyl)acetamidine + L-glutamate + ADP + phosphate + H(+). The protein operates within purine metabolism; IMP biosynthesis via de novo pathway; 5-amino-1-(5-phospho-D-ribosyl)imidazole from N(2)-formyl-N(1)-(5-phospho-D-ribosyl)glycinamide: step 1/2. In terms of biological role, part of the phosphoribosylformylglycinamidine synthase complex involved in the purines biosynthetic pathway. Catalyzes the ATP-dependent conversion of formylglycinamide ribonucleotide (FGAR) and glutamine to yield formylglycinamidine ribonucleotide (FGAM) and glutamate. The FGAM synthase complex is composed of three subunits. PurQ produces an ammonia molecule by converting glutamine to glutamate. PurL transfers the ammonia molecule to FGAR to form FGAM in an ATP-dependent manner. PurS interacts with PurQ and PurL and is thought to assist in the transfer of the ammonia molecule from PurQ to PurL. This Parvibaculum lavamentivorans (strain DS-1 / DSM 13023 / NCIMB 13966) protein is Phosphoribosylformylglycinamidine synthase subunit PurL.